We begin with the raw amino-acid sequence, 222 residues long: Noggin (222 aa).

The first 19 residues, 1 to 19 (MDHSQCLVTIYALMVFLGL), serve as a signal peptide directing secretion. N-linked (GlcNAc...) asparagine glycosylation occurs at Asn-61. 4 cysteine pairs are disulfide-bonded: Cys-145–Cys-182, Cys-168–Cys-218, Cys-174–Cys-220, and Cys-197–Cys-205.

It belongs to the noggin family. As to quaternary structure, homodimer.

The protein localises to the secreted. Its function is as follows. Patterns the embryo by interrupting bone morphogenetic proteins (BMP) signaling. Binds BMP-4 and BMP-2 with high affinity. Can abolish BMP-4 activity by blocking binding to cognate cell-surface receptors. Capable of inducing dorsal development in embryos. Causes dorsal mesodermal differentiation of animal cap ectoderm when coexpressed with xWNT-8 and nuclear, sequence-specific DNA-binding protein xBRA. None of these molecules causes dorsal mesoderm formation when expressed alone. The sequence is that of Noggin (nog) from Xenopus laevis (African clawed frog).